The following is a 209-amino-acid chain: tRNA (guanine-N(7)-)-methyltransferase (209 aa).

D35, E60, N87, and D113 together coordinate S-adenosyl-L-methionine. D113 is a catalytic residue. Positions 117 and 149 each coordinate substrate.

Belongs to the class I-like SAM-binding methyltransferase superfamily. TrmB family.

It carries out the reaction guanosine(46) in tRNA + S-adenosyl-L-methionine = N(7)-methylguanosine(46) in tRNA + S-adenosyl-L-homocysteine. It functions in the pathway tRNA modification; N(7)-methylguanine-tRNA biosynthesis. Functionally, catalyzes the formation of N(7)-methylguanine at position 46 (m7G46) in tRNA. The protein is tRNA (guanine-N(7)-)-methyltransferase of Prochlorococcus marinus subsp. pastoris (strain CCMP1986 / NIES-2087 / MED4).